A 430-amino-acid chain; its full sequence is Glutamate-1-semialdehyde 2,1-aminomutase (430 aa).

The residue at position 267 (lysine 267) is an N6-(pyridoxal phosphate)lysine.

This sequence belongs to the class-III pyridoxal-phosphate-dependent aminotransferase family. HemL subfamily. Homodimer. It depends on pyridoxal 5'-phosphate as a cofactor.

The protein resides in the cytoplasm. The enzyme catalyses (S)-4-amino-5-oxopentanoate = 5-aminolevulinate. It participates in porphyrin-containing compound metabolism; protoporphyrin-IX biosynthesis; 5-aminolevulinate from L-glutamyl-tRNA(Glu): step 2/2. The polypeptide is Glutamate-1-semialdehyde 2,1-aminomutase (Sulfurovum sp. (strain NBC37-1)).